We begin with the raw amino-acid sequence, 487 residues long: Serine/threonine-protein kinase 4 (487 aa).

Met1 carries the N-acetylmethionine modification. Phosphothreonine is present on Thr3. Residues 30 to 281 (FDVLEKLGEG…ATQLLQHPFV (252 aa)) enclose the Protein kinase domain. ATP contacts are provided by residues 36–44 (LGEGSYGSV) and Lys59. The Proton acceptor role is filled by Asp149. The residue at position 183 (Thr183) is a Phosphothreonine; by autocatalysis. A Phosphoserine modification is found at Ser265. Residues 290 to 310 (LRDLINEAMDVKLKRQEAQQR) adopt a coiled-coil conformation. The disordered stretch occupies residues 305 to 337 (QEAQQREVDQDDEENSEEDELDSGTMVRAVGDE). Residues 313-326 (DQDDEENSEEDELD) show a composition bias toward acidic residues. Ser320 carries the phosphoserine modification. Phosphothreonine occurs at positions 340 and 367. Thr387 is modified (phosphothreonine; by PKB/AKT1). Ser410 and Ser414 each carry phosphoserine. Tyr433 is subject to Phosphotyrosine. An SARAH domain is found at 433–480 (YEFLKSWTVEDLQKRLLALDPMMEQEIEEIRQKYQSKRQPILDAIEAK).

It belongs to the protein kinase superfamily. STE Ser/Thr protein kinase family. STE20 subfamily. Homodimer; mediated via the coiled-coil region. Interacts with NORE1, which inhibits autoactivation. Interacts with and stabilizes SAV1. Interacts with RASSF1. Interacts with FOXO3. Interacts with RASSF2 (via SARAH domain). Interacts with AR, PKB/AKT1, TNNI3 and SIRT1. Interacts with DLG5 (via PDZ domain 3). Interacts with MARK3 and SCRIB in the presence of DLG5. It depends on Mg(2+) as a cofactor. In terms of processing, autophosphorylated on serine and threonine residues. Phosphorylation at Thr-387 by PKB/AKT1, leads to inhibition of its: kinase activity, nuclear translocation and autophosphorylation at Thr-183. It also diminishes its cleavage by caspases and its ability to phosphorylate FOXO3. Post-translationally, proteolytically cleaved by caspase-3 during apoptosis at Asp-326 and Asp-349 resulting in a 37 kDa or a 39 kDa subunit respectively. The 39 kDa subunit is further cleaved into the 37 kDa form. Proteolytic cleavage results in kinase activation and nuclear translocation of the truncated form (MST1/N). It is less likely that cleavage at Asp-349 is a prerequisite for activation as this site is not conserved in the murine ortholog.

It is found in the cytoplasm. It localises to the nucleus. The enzyme catalyses L-seryl-[protein] + ATP = O-phospho-L-seryl-[protein] + ADP + H(+). The catalysed reaction is L-threonyl-[protein] + ATP = O-phospho-L-threonyl-[protein] + ADP + H(+). Inhibited by the C-terminal non-catalytic region. Activated by caspase-cleavage. Full activation also requires homodimerization and autophosphorylation of Thr-183. Activated by RASSF1 which acts by preventing its dephosphorylation. Its function is as follows. Stress-activated, pro-apoptotic kinase which, following caspase-cleavage, enters the nucleus and induces chromatin condensation followed by internucleosomal DNA fragmentation. Key component of the Hippo signaling pathway which plays a pivotal role in organ size control and tumor suppression by restricting proliferation and promoting apoptosis. The core of this pathway is composed of a kinase cascade wherein STK3/MST2 and STK4/MST1, in complex with its regulatory protein SAV1, phosphorylates and activates LATS1/2 in complex with its regulatory protein MOB1, which in turn phosphorylates and inactivates YAP1 oncoprotein and WWTR1/TAZ. Phosphorylation of YAP1 by LATS2 inhibits its translocation into the nucleus to regulate cellular genes important for cell proliferation, cell death, and cell migration. STK3/MST2 and STK4/MST1 are required to repress proliferation of mature hepatocytes, to prevent activation of facultative adult liver stem cells (oval cells), and to inhibit tumor formation. Phosphorylates 'Ser-14' of histone H2B (H2BS14ph) during apoptosis. Phosphorylates FOXO3 upon oxidative stress, which results in its nuclear translocation and cell death initiation. Phosphorylates MOBKL1A, MOBKL1B and RASSF2. Phosphorylates TNNI3 (cardiac Tn-I) and alters its binding affinity to TNNC1 (cardiac Tn-C) and TNNT2 (cardiac Tn-T). Phosphorylates FOXO1 on 'Ser-212' and regulates its activation and stimulates transcription of PMAIP1 in a FOXO1-dependent manner. Phosphorylates SIRT1 and inhibits SIRT1-mediated p53/TP53 deacetylation, thereby promoting p53/TP53 dependent transcription and apoptosis upon DNA damage. Acts as an inhibitor of PKB/AKT1. Phosphorylates AR on 'Ser-650' and suppresses its activity by intersecting with PKB/AKT1 signaling and antagonizing formation of AR-chromatin complexes. This Otolemur garnettii (Small-eared galago) protein is Serine/threonine-protein kinase 4 (STK4).